A 190-amino-acid chain; its full sequence is Putative serine carboxypeptidase-like 54 (190 aa).

The first 25 residues, 1–25, serve as a signal peptide directing secretion; the sequence is MATKTFSLPFLLIVCIFSQLSSTFG. 3 N-linked (GlcNAc...) asparagine glycosylation sites follow: Asn-58, Asn-59, and Asn-105.

This sequence belongs to the peptidase S10 family.

The protein resides in the secreted. The protein is Putative serine carboxypeptidase-like 54 (SCPL54) of Arabidopsis thaliana (Mouse-ear cress).